A 590-amino-acid polypeptide reads, in one-letter code: 4-oxocyclohex-2-ene-1-carboxylate 5-dehydrogenase (590 aa).

The protein belongs to the FAD-dependent oxidoreductase 2 family. In terms of assembly, forms multimers. FAD serves as cofactor.

It carries out the reaction 4-oxocyclohex-2-ene-1-carboxylate + NAD(+) = 4-oxocyclohexa-2,5-diene-1-carboxylate + NADH + H(+). In terms of biological role, desaturase involved in a cyclohexanecarboxylate (CHCA) degradation pathway. Probably catalyzes the conversion of 4-oxocyclohexenecarboxylate to 4-oxocyclohex-2,5-dienecarboxylate, which is spontaneously isomerized to 4-hydroxybenzoate (4-HBA). This chain is 4-oxocyclohex-2-ene-1-carboxylate 5-dehydrogenase, found in Sinomonas cyclohexanicum (Corynebacterium cyclohexanicum).